A 438-amino-acid polypeptide reads, in one-letter code: Adenosylhomocysteinase (438 aa).

Substrate-binding residues include threonine 61, aspartate 137, and glutamate 162. 163–165 is a binding site for NAD(+); that stretch reads TTT. Substrate contacts are provided by lysine 192 and aspartate 196. Residues asparagine 197, 226–231, glutamate 249, asparagine 284, 305–307, and asparagine 352 contribute to the NAD(+) site; these read GYGDVG and IGH.

The protein belongs to the adenosylhomocysteinase family. The cofactor is NAD(+).

It is found in the cytoplasm. The catalysed reaction is S-adenosyl-L-homocysteine + H2O = L-homocysteine + adenosine. The protein operates within amino-acid biosynthesis; L-homocysteine biosynthesis; L-homocysteine from S-adenosyl-L-homocysteine: step 1/1. Its function is as follows. May play a key role in the regulation of the intracellular concentration of adenosylhomocysteine. This chain is Adenosylhomocysteinase, found in Flavobacterium johnsoniae (strain ATCC 17061 / DSM 2064 / JCM 8514 / BCRC 14874 / CCUG 350202 / NBRC 14942 / NCIMB 11054 / UW101) (Cytophaga johnsonae).